A 304-amino-acid polypeptide reads, in one-letter code: MDYQQILDTINDEMSYRDVTGKVASYIPELAKVDRRKFGMHVYCGDQQHFSFGDSEENFSIQSISKVFTLAMAMRLMGEDLWDRLDVEPSGDPFNSLTQLEYESGIPRNPFINAGALVISDILVDQLEDPKKELLEFVRKITGDDNIHYNETVAASEKSTGYRNIALVNYIKALGNIKCDVEPIVDFYFYQCSLAMSCSQLSKAFMIFANKGRILETDEKILKPKTVKRINALMQTCGFYDEAGEFSFQVGMPGKSGVGGGIVAIHPDNYSVAVWSPILNENGNSELGMKALERFTTLTGVSVF.

The substrate site is built by Ser63, Asn113, Glu157, Asn164, Tyr188, Tyr240, and Val258.

Belongs to the glutaminase family. Homotetramer.

It catalyses the reaction L-glutamine + H2O = L-glutamate + NH4(+). This chain is Glutaminase, found in Christiangramia forsetii (strain DSM 17595 / CGMCC 1.15422 / KT0803) (Gramella forsetii).